Here is a 205-residue protein sequence, read N- to C-terminus: Large ribosomal subunit protein uL4 (205 aa).

A disordered region spans residues 43-95 (RSGNRAQKDRAEVKHSTKKPWRQKGTGRARAGMTSSPLWRGGGRAFPNSPEEN). Residues 48 to 57 (AQKDRAEVKH) are compositionally biased toward basic and acidic residues. Over residues 58 to 69 (STKKPWRQKGTG) the composition is skewed to basic residues.

It belongs to the universal ribosomal protein uL4 family. As to quaternary structure, part of the 50S ribosomal subunit.

Its function is as follows. One of the primary rRNA binding proteins, this protein initially binds near the 5'-end of the 23S rRNA. It is important during the early stages of 50S assembly. It makes multiple contacts with different domains of the 23S rRNA in the assembled 50S subunit and ribosome. Functionally, forms part of the polypeptide exit tunnel. This chain is Large ribosomal subunit protein uL4, found in Bordetella bronchiseptica (strain ATCC BAA-588 / NCTC 13252 / RB50) (Alcaligenes bronchisepticus).